The sequence spans 356 residues: 4-hydroxy-3-methylbut-2-en-1-yl diphosphate synthase (flavodoxin) (356 aa).

[4Fe-4S] cluster-binding residues include Cys262, Cys265, Cys297, and Glu304.

Belongs to the IspG family. Requires [4Fe-4S] cluster as cofactor.

The catalysed reaction is (2E)-4-hydroxy-3-methylbut-2-enyl diphosphate + oxidized [flavodoxin] + H2O + 2 H(+) = 2-C-methyl-D-erythritol 2,4-cyclic diphosphate + reduced [flavodoxin]. It participates in isoprenoid biosynthesis; isopentenyl diphosphate biosynthesis via DXP pathway; isopentenyl diphosphate from 1-deoxy-D-xylulose 5-phosphate: step 5/6. Converts 2C-methyl-D-erythritol 2,4-cyclodiphosphate (ME-2,4cPP) into 1-hydroxy-2-methyl-2-(E)-butenyl 4-diphosphate. This Campylobacter fetus subsp. fetus (strain 82-40) protein is 4-hydroxy-3-methylbut-2-en-1-yl diphosphate synthase (flavodoxin).